Here is a 141-residue protein sequence, read N- to C-terminus: Nucleoside diphosphate kinase (141 aa).

The ATP site is built by K11, F59, R87, T93, R104, and N114. H117 functions as the Pros-phosphohistidine intermediate in the catalytic mechanism.

This sequence belongs to the NDK family. As to quaternary structure, homotetramer. Mg(2+) serves as cofactor.

It localises to the cytoplasm. The enzyme catalyses a 2'-deoxyribonucleoside 5'-diphosphate + ATP = a 2'-deoxyribonucleoside 5'-triphosphate + ADP. The catalysed reaction is a ribonucleoside 5'-diphosphate + ATP = a ribonucleoside 5'-triphosphate + ADP. In terms of biological role, major role in the synthesis of nucleoside triphosphates other than ATP. The ATP gamma phosphate is transferred to the NDP beta phosphate via a ping-pong mechanism, using a phosphorylated active-site intermediate. The chain is Nucleoside diphosphate kinase from Xylella fastidiosa (strain M23).